A 476-amino-acid polypeptide reads, in one-letter code: GTPase Der (476 aa).

EngA-type G domains lie at 3–167 (FTVA…GEER) and 205–380 (LRVA…KVWN). GTP-binding positions include 9–16 (GRPNVGKS), 56–60 (DTAGL), 119–122 (NKSE), 211–218 (GRPNAGKS), 258–262 (DTAGM), and 323–326 (NKWD). A KH-like domain is found at 381–465 (RRISTARLNR…PIRVHFRASE (85 aa)).

It belongs to the TRAFAC class TrmE-Era-EngA-EngB-Septin-like GTPase superfamily. EngA (Der) GTPase family. In terms of assembly, associates with the 50S ribosomal subunit.

Its function is as follows. GTPase that plays an essential role in the late steps of ribosome biogenesis. The sequence is that of GTPase Der from Rhizobium meliloti (strain 1021) (Ensifer meliloti).